The chain runs to 391 residues: 3-ketoacyl-CoA thiolase (391 aa).

Catalysis depends on C95, which acts as the Acyl-thioester intermediate. Residues H347 and C377 each act as proton acceptor in the active site.

Belongs to the thiolase-like superfamily. Thiolase family. In terms of assembly, heterotetramer of two alpha chains (FadB) and two beta chains (FadA).

It localises to the cytoplasm. It catalyses the reaction an acyl-CoA + acetyl-CoA = a 3-oxoacyl-CoA + CoA. It participates in lipid metabolism; fatty acid beta-oxidation. Functionally, catalyzes the final step of fatty acid oxidation in which acetyl-CoA is released and the CoA ester of a fatty acid two carbons shorter is formed. This chain is 3-ketoacyl-CoA thiolase, found in Saccharophagus degradans (strain 2-40 / ATCC 43961 / DSM 17024).